Consider the following 52-residue polypeptide: Defensin-like protein 2B (52 aa).

4 cysteine pairs are disulfide-bonded: Cys4–Cys52, Cys16–Cys37, Cys22–Cys46, and Cys26–Cys48.

Forms oligomers in its native state.

In terms of biological role, possesses antifungal activity sensitive to inorganic cations. In Sinapis alba (White mustard), this protein is Defensin-like protein 2B.